The following is a 425-amino-acid chain: Sucrose-phosphatase 1 (425 aa).

It belongs to the sucrose phosphatase family. As to quaternary structure, homodimer. Mg(2+) is required as a cofactor.

The enzyme catalyses sucrose 6(F)-phosphate + H2O = sucrose + phosphate. It participates in glycan biosynthesis; sucrose biosynthesis; sucrose from D-fructose 6-phosphate and UDP-alpha-D-glucose: step 2/2. Its activity is regulated as follows. Inhibited by EDTA. Its function is as follows. Catalyzes the final step of sucrose synthesis. In Nicotiana tabacum (Common tobacco), this protein is Sucrose-phosphatase 1 (SPP1).